We begin with the raw amino-acid sequence, 883 residues long: Bifunctional heparan sulfate N-deacetylase/N-sulfotransferase 2 (883 aa).

The Cytoplasmic portion of the chain corresponds to 1 to 18; sequence MLQLWKVVRPARQLELHR. A helical; Signal-anchor for type II membrane protein membrane pass occupies residues 19–39; the sequence is LILLLIAFSLGSMGFLAYYVS. Residues 40–883 lie on the Lumenal side of the membrane; that stretch reads TSPKAKEPLP…REELQHSSLG (844 aa). The interval 41–597 is heparan sulfate N-deacetylase 2; that stretch reads SPKAKEPLPL…KRHKDIWSKE (557 aa). A disordered region spans residues 49 to 81; the sequence is PLPLGDCSSGGAAGPGPARPPVPPRPPRPPETA. Pro residues predominate over residues 65 to 78; sequence PARPPVPPRPPRPP. N-linked (GlcNAc...) asparagine glycosylation is found at N233, N350, and N400. Positions 598-883 are heparan sulfate N-sulfotransferase 2; sequence KTCDRLPKFL…REELQHSSLG (286 aa). The active-site For sulfotransferase activity is K613. A 3'-phosphoadenylyl sulfate-binding site is contributed by 613 to 617; that stretch reads KTGTT. N-linked (GlcNAc...) asparagine glycosylation occurs at N666. A 3'-phosphoadenylyl sulfate-binding site is contributed by S711. 2 N-linked (GlcNAc...) asparagine glycosylation sites follow: N726 and N802. Residues C817 and C827 are joined by a disulfide bond. Residue 832–836 participates in 3'-phosphoadenylyl sulfate binding; it reads KGRRY.

The protein belongs to the sulfotransferase 1 family. NDST subfamily. In terms of assembly, monomer.

It localises to the golgi apparatus membrane. It carries out the reaction alpha-D-glucosaminyl-[heparan sulfate](n) + 3'-phosphoadenylyl sulfate = N-sulfo-alpha-D-glucosaminyl-[heparan sulfate](n) + adenosine 3',5'-bisphosphate + 2 H(+). It participates in glycan metabolism; heparan sulfate biosynthesis. The protein operates within glycan metabolism; heparin biosynthesis. Essential bifunctional enzyme that catalyzes both the N-deacetylation and the N-sulfation of glucosamine (GlcNAc) of the glycosaminoglycan in heparan sulfate. Modifies the GlcNAc-GlcA disaccharide repeating sugar backbone to make N-sulfated heparosan, a prerequisite substrate for later modifications in heparin biosynthesis. Plays a role in determining the extent and pattern of sulfation of heparan sulfate. Required for the exosomal release of SDCBP, CD63 and syndecan. This chain is Bifunctional heparan sulfate N-deacetylase/N-sulfotransferase 2 (NDST2), found in Homo sapiens (Human).